A 189-amino-acid chain; its full sequence is NADH-quinone oxidoreductase subunit B (189 aa).

[4Fe-4S] cluster contacts are provided by Cys-39, Cys-40, Cys-104, and Cys-135.

Belongs to the complex I 20 kDa subunit family. NDH-1 is composed of 14 different subunits. Subunits NuoB, C, D, E, F, and G constitute the peripheral sector of the complex. [4Fe-4S] cluster is required as a cofactor.

The protein localises to the cell inner membrane. The catalysed reaction is a quinone + NADH + 5 H(+)(in) = a quinol + NAD(+) + 4 H(+)(out). Functionally, NDH-1 shuttles electrons from NADH, via FMN and iron-sulfur (Fe-S) centers, to quinones in the respiratory chain. The immediate electron acceptor for the enzyme in this species is believed to be a menaquinone. Couples the redox reaction to proton translocation (for every two electrons transferred, four hydrogen ions are translocated across the cytoplasmic membrane), and thus conserves the redox energy in a proton gradient. This is NADH-quinone oxidoreductase subunit B from Chlorobium limicola (strain DSM 245 / NBRC 103803 / 6330).